A 45-amino-acid polypeptide reads, in one-letter code: uncharacterized protein (45 aa).

Residues 18–45 (RRGRIGVQPSPERRSEVVGPFPLARSLS) form a disordered region.

This is an uncharacterized protein from Homo sapiens (Human).